The sequence spans 203 residues: Arcadin-2 (203 aa).

As to quaternary structure, interacts with crenactin.

The protein localises to the cytoplasm. Its subcellular location is the cytoskeleton. In terms of biological role, part of an actin-like archaeal cytoskeleton. Prevents polymerization of crenactin filaments by binding its C-terminus into crenactin's hydrophobic groove. May act by competing with the D-loop of the following crenactin subunit for the hydrophobic groove. This chain is Arcadin-2, found in Pyrobaculum calidifontis (strain DSM 21063 / JCM 11548 / VA1).